A 471-amino-acid chain; its full sequence is MGVGRVTQIMGPVIDVRFNHDELPKINNALVLDVPKKDGTTESLTLEVALELGDDVVRTIAMDSTDGIKRGDDVKDTGRPISVPVGDDTLGRVFNVLGDPIDNAGPIPESVPREPIHRQPPPFDELSTKVEILETGIKVVDLLAPYIKGGKVGLFGGAGVGKTVLIQELINNIAQEHGGISVFAGVGERTREGNDLYFEMSDSGVIKKTAMVFGQMNEPPGARMRVALSGLTMAEYFRDVKGQDVLLFIDNIFRFTQAGSEVSALLGRMPSAVGYQPTLATEMGQLQERITSTMKGSITSIQAVFVPADDYTDPAPATAFAHLDATTNLERKLTEMGIYPAVDPLASTSRALEPSIVGQEHYDVARRVQATLQKYRELQDIIAILGMDELSDEDKSTVERARRIQFFLSQNFHVAEQFTGQKGSYVSVKRTVEDFKDILEGKYDHIPEDAFRLVGSMDDVLEKAKDMGVEV.

ATP is bound at residue 156-163 (GGAGVGKT).

It belongs to the ATPase alpha/beta chains family. F-type ATPases have 2 components, CF(1) - the catalytic core - and CF(0) - the membrane proton channel. CF(1) has five subunits: alpha(3), beta(3), gamma(1), delta(1), epsilon(1). CF(0) has three main subunits: a(1), b(2) and c(9-12). The alpha and beta chains form an alternating ring which encloses part of the gamma chain. CF(1) is attached to CF(0) by a central stalk formed by the gamma and epsilon chains, while a peripheral stalk is formed by the delta and b chains.

The protein localises to the cell membrane. It catalyses the reaction ATP + H2O + 4 H(+)(in) = ADP + phosphate + 5 H(+)(out). Its function is as follows. Produces ATP from ADP in the presence of a proton gradient across the membrane. The catalytic sites are hosted primarily by the beta subunits. The protein is ATP synthase subunit beta of Staphylococcus carnosus (strain TM300).